A 548-amino-acid chain; its full sequence is Membrane protein insertase YidC (548 aa).

The helical transmembrane segment at 6 to 26 threads the bilayer; it reads NLLVIALLFVSFMIWQAWEQD. The interval 28 to 55 is disordered; the sequence is NPQPQAQQTTQTTTTAAGSAADQGVPAS. Residues 30 to 50 show a composition bias toward low complexity; the sequence is QPQAQQTTQTTTTAAGSAADQ. Helical transmembrane passes span 350–370, 420–440, 458–478, and 499–519; these read FVGNWGFSIIIITFIVRGIMY, LGGCFPLLIQMPIFLALYYML, LSAQDPYYILPILMGVTMFFI, and PVIFTVFFLWFPSGLVLYYIV.

It belongs to the OXA1/ALB3/YidC family. Type 1 subfamily. In terms of assembly, interacts with the Sec translocase complex via SecD. Specifically interacts with transmembrane segments of nascent integral membrane proteins during membrane integration.

It localises to the cell inner membrane. Its function is as follows. Required for the insertion and/or proper folding and/or complex formation of integral membrane proteins into the membrane. Involved in integration of membrane proteins that insert both dependently and independently of the Sec translocase complex, as well as at least some lipoproteins. Aids folding of multispanning membrane proteins. The chain is Membrane protein insertase YidC from Shigella dysenteriae serotype 1 (strain Sd197).